Here is a 349-residue protein sequence, read N- to C-terminus: Isopentenyl-diphosphate delta-isomerase (349 aa).

Residue 6–7 (RK) participates in substrate binding. Residues 62–64 (AMT), Ser93, and Asn122 each bind FMN. Gln152 is a binding site for substrate. Residue Glu153 coordinates Mg(2+). Residues Lys184, Thr214, 258–259 (GG), and 280–281 (AG) each bind FMN.

This sequence belongs to the IPP isomerase type 2 family. Homooctamer. Dimer of tetramers. FMN is required as a cofactor. It depends on NADPH as a cofactor. The cofactor is Mg(2+).

The protein localises to the cytoplasm. It carries out the reaction isopentenyl diphosphate = dimethylallyl diphosphate. Involved in the biosynthesis of isoprenoids. Catalyzes the 1,3-allylic rearrangement of the homoallylic substrate isopentenyl (IPP) to its allylic isomer, dimethylallyl diphosphate (DMAPP). The sequence is that of Isopentenyl-diphosphate delta-isomerase from Bacillus cereus (strain ATCC 10987 / NRS 248).